The sequence spans 791 residues: Lon protease (791 aa).

Residues 3–209 (KPILISRAIV…TILHLLFDQL (207 aa)) enclose the Lon N-terminal domain. ATP is bound at residue 365–372 (GPPGVGKT). A Lon proteolytic domain is found at 605 to 790 (TTIPGIVNGM…DEVYNIVFGE (186 aa)). Catalysis depends on residues serine 696 and lysine 739.

The protein belongs to the peptidase S16 family. In terms of assembly, homohexamer. Organized in a ring with a central cavity.

The protein resides in the cytoplasm. The catalysed reaction is Hydrolysis of proteins in presence of ATP.. Functionally, ATP-dependent serine protease that mediates the selective degradation of mutant and abnormal proteins as well as certain short-lived regulatory proteins. Required for cellular homeostasis and for survival from DNA damage and developmental changes induced by stress. Degrades polypeptides processively to yield small peptide fragments that are 5 to 10 amino acids long. Binds to DNA in a double-stranded, site-specific manner. This is Lon protease from Ureaplasma parvum serovar 3 (strain ATCC 27815 / 27 / NCTC 11736).